The sequence spans 354 residues: Dye-decolorizing peroxidase (354 aa).

Asp-165 functions as the Proton acceptor in the catalytic mechanism. His-238 provides a ligand contact to heme. Residues Gly-312–Ala-335 form a targeting peptide region. Residues Asp-324–Pro-337 are compositionally biased toward pro residues. Residues Asp-324–Arg-354 form a disordered region. The segment covering Gly-342–Arg-354 has biased composition (polar residues).

Belongs to the DyP-type peroxidase family. As to quaternary structure, found in a complex with type 1 encapsulin, strongly suggesting it is found in a type 1 encapsulin nanocompartment. Homotetramer, presumably also in the type 1 encapsulin nanocompartment. The cofactor is heme b.

The protein resides in the encapsulin nanocompartment. The protein localises to the cell membrane. It catalyses the reaction 2 a phenolic donor + H2O2 = 2 a phenolic radical donor + 2 H2O. Its function is as follows. Cargo protein of a type 1 encapsulin nanocompartment. A heme-dependent peroxidase. This cargo-loaded encapsulin nanocompartment is probably involved in protection against oxidative damage. This is Dye-decolorizing peroxidase from Mycolicibacterium paratuberculosis (strain ATCC BAA-968 / K-10) (Mycobacterium paratuberculosis).